The primary structure comprises 201 residues: Recombination protein RecR (201 aa).

The segment at 58–73 adopts a C4-type zinc-finger fold; sequence CPECGLLTEEERCGLC. One can recognise a Toprim domain in the interval 81-176; that stretch reads TLLCVVESSA…RTTRIAHGVP (96 aa).

This sequence belongs to the RecR family.

Its function is as follows. May play a role in DNA repair. It seems to be involved in an RecBC-independent recombinational process of DNA repair. It may act with RecF and RecO. The sequence is that of Recombination protein RecR from Halorhodospira halophila (strain DSM 244 / SL1) (Ectothiorhodospira halophila (strain DSM 244 / SL1)).